The primary structure comprises 1351 residues: DNA-directed RNA polymerase subunit beta' (1351 aa).

Zn(2+) contacts are provided by Cys-70, Cys-72, Cys-85, and Cys-88. Mg(2+) is bound by residues Asp-460, Asp-462, and Asp-464. The Zn(2+) site is built by Cys-801, Cys-875, Cys-882, and Cys-885.

Belongs to the RNA polymerase beta' chain family. As to quaternary structure, the RNAP catalytic core consists of 2 alpha, 1 beta, 1 beta' and 1 omega subunit. When a sigma factor is associated with the core the holoenzyme is formed, which can initiate transcription. Mg(2+) serves as cofactor. Requires Zn(2+) as cofactor.

The enzyme catalyses RNA(n) + a ribonucleoside 5'-triphosphate = RNA(n+1) + diphosphate. DNA-dependent RNA polymerase catalyzes the transcription of DNA into RNA using the four ribonucleoside triphosphates as substrates. The polypeptide is DNA-directed RNA polymerase subunit beta' (Syntrophobacter fumaroxidans (strain DSM 10017 / MPOB)).